A 297-amino-acid polypeptide reads, in one-letter code: ABSCISIC ACID-INSENSITIVE 5-like protein 2 (297 aa).

A phosphoserine mark is found at serine 21, serine 43, and serine 81. Disordered regions lie at residues 100–119 (IQQNKNGGSAHERRDKQPTL) and 138–157 (IPGSNHDGPVGGGSAGSGAG). Threonine 118 bears the Phosphothreonine mark. The span at 146–157 (PVGGGSAGSGAG) shows a compositional bias: gly residues. Residues 225–288 (VERRQKRMIK…SVPPPDPKRQ (64 aa)) enclose the bZIP domain. The basic motif stretch occupies residues 227–246 (RRQKRMIKNRESAARSRARK). The interval 253-267 (LEIKVSRLEEENERL) is leucine-zipper. The disordered stretch occupies residues 272 to 297 (EVEKILPSVPPPDPKRQLRRTSSAPF).

This sequence belongs to the bZIP family. ABI5 subfamily. In terms of assembly, DNA-binding heterodimer with ABI5/DPBF1, DPBF2 or EEL/DPBF4. Interacts with the AFP proteins AFP1, AFP2, AFP3 and AFP4. Predominantly expressed in seeds.

It localises to the nucleus. Functionally, binds to the embryo specification element and the ABA-responsive element (ABRE) of the Dc3 gene promoter. Could participate in abscisic acid-regulated gene expression during seed development. This is ABSCISIC ACID-INSENSITIVE 5-like protein 2 (DPBF3) from Arabidopsis thaliana (Mouse-ear cress).